The primary structure comprises 131 residues: Antitoxin MqsA (131 aa).

Zn(2+) is bound by residues Cys-3, Cys-6, Cys-37, and Cys-40. An HTH cro/C1-type domain is found at 74–127 (IVKVRKKLSLTQKEASEIFGGGVNAFSRYEKGNAQPHPSTIKLLRVLDKHPELL). A DNA-binding region (H-T-H motif) is located at residues 85 to 104 (QKEASEIFGGGVNAFSRYEK).

As to quaternary structure, homodimer. Crystallizes as a heterotetramer with MqsA, MqsR-MqsA(2)-MqsR. Purifies as a probable heterohexamer of 2 MqsR dimers and 1 MqsA dimer. Binds promoter DNA as a dimer. When the 2 dissociate the MsqR mRNA interferase becomes active. Zn(2+) serves as cofactor. In terms of processing, degraded in the presence of oxidative stress, maybe by the Lon and/or ClpX proteases.

Antitoxin component of a type II toxin-antitoxin (TA) system. Labile antitoxin that binds to the MqsR mRNA interferase toxin and neutralizes its endoribonuclease activity. Overexpression prevents MqsR-mediated cessation of cell growth and inhibition of cell proliferation. Initially reported to act as a cotranscription factor with MqsA. Following further experiments, the MqsR-MqsA complex does not bind DNA and all reported data are actually due to a small fraction of free MqsA alone binding DNA. Addition of MqsR to a preformed MqsA-promoter DNA complex causes dissociation of the MqsA-DNA complex, probably causing derepression of MqsA-repressed transcripts. MqsA binds to 2 palindromes in the promoter region of the mqsRA operon activating its transcription. Binds to other promoters, inducing mcbR and spy and repressing cspD among others. Binds to and represses the rpoS promoter, the master stress regulator, resulting in decreased cyclic-di-GMP, reduced stress resistance, increased cell motility and decreased biofilm formation; in these experiments 5 TA systems are missing (lacks MazEF, RelEB, ChpB, YoeB-YefM, YafQ-DinJ). An earlier study showed overexpression alone increases biofilm formation, perhaps by repressing cspD; in these experiments the 5 TA systems are present. Represses the csgD promoter. In the presence of stress, when this protein is degraded, the promoters it represses are derepressed, leading to biofilm formation. This TA system mediates cell growth during bile acid deoxycholate stress by degrading mRNA for probable deoxycholate-binding protein YgiS; bile acid detergents such as deoxycholate are important for host defense against bacterial growth in the gall bladder and duodenum. The protein is Antitoxin MqsA of Escherichia coli (strain K12).